Reading from the N-terminus, the 445-residue chain is Methylthioribose-1-phosphate isomerase (445 aa).

D286 acts as the Proton donor in catalysis.

It belongs to the eIF-2B alpha/beta/delta subunits family. MtnA subfamily.

It is found in the cytoplasm. The protein localises to the nucleus. It carries out the reaction 5-(methylsulfanyl)-alpha-D-ribose 1-phosphate = 5-(methylsulfanyl)-D-ribulose 1-phosphate. It functions in the pathway amino-acid biosynthesis; L-methionine biosynthesis via salvage pathway; L-methionine from S-methyl-5-thio-alpha-D-ribose 1-phosphate: step 1/6. Its function is as follows. Catalyzes the interconversion of methylthioribose-1-phosphate (MTR-1-P) into methylthioribulose-1-phosphate (MTRu-1-P). This Sclerotinia sclerotiorum (strain ATCC 18683 / 1980 / Ss-1) (White mold) protein is Methylthioribose-1-phosphate isomerase (mri1).